The primary structure comprises 321 residues: Holliday junction branch migration complex subunit RuvB (321 aa).

Residues 1–173 (MMMEQECVDD…FGIISRLEFY (173 aa)) form a large ATPase domain (RuvB-L) region. ATP-binding positions include Ile-12, Arg-13, Gly-54, Lys-57, Thr-58, Thr-59, 120 to 122 (EDF), Arg-163, Tyr-173, and Arg-210. Mg(2+) is bound at residue Thr-58. Positions 174–244 (TPAELACIVK…LASDALARMD (71 aa)) are small ATPAse domain (RuvB-S). A head domain (RuvB-H) region spans residues 247-321 (ELGLDQMDRK…KAYRHMNLLA (75 aa)). 2 residues coordinate DNA: Arg-302 and Arg-307.

Belongs to the RuvB family. In terms of assembly, homohexamer. Forms an RuvA(8)-RuvB(12)-Holliday junction (HJ) complex. HJ DNA is sandwiched between 2 RuvA tetramers; dsDNA enters through RuvA and exits via RuvB. An RuvB hexamer assembles on each DNA strand where it exits the tetramer. Each RuvB hexamer is contacted by two RuvA subunits (via domain III) on 2 adjacent RuvB subunits; this complex drives branch migration. In the full resolvosome a probable DNA-RuvA(4)-RuvB(12)-RuvC(2) complex forms which resolves the HJ.

It localises to the cytoplasm. The enzyme catalyses ATP + H2O = ADP + phosphate + H(+). In terms of biological role, the RuvA-RuvB-RuvC complex processes Holliday junction (HJ) DNA during genetic recombination and DNA repair, while the RuvA-RuvB complex plays an important role in the rescue of blocked DNA replication forks via replication fork reversal (RFR). RuvA specifically binds to HJ cruciform DNA, conferring on it an open structure. The RuvB hexamer acts as an ATP-dependent pump, pulling dsDNA into and through the RuvAB complex. RuvB forms 2 homohexamers on either side of HJ DNA bound by 1 or 2 RuvA tetramers; 4 subunits per hexamer contact DNA at a time. Coordinated motions by a converter formed by DNA-disengaged RuvB subunits stimulates ATP hydrolysis and nucleotide exchange. Immobilization of the converter enables RuvB to convert the ATP-contained energy into a lever motion, pulling 2 nucleotides of DNA out of the RuvA tetramer per ATP hydrolyzed, thus driving DNA branch migration. The RuvB motors rotate together with the DNA substrate, which together with the progressing nucleotide cycle form the mechanistic basis for DNA recombination by continuous HJ branch migration. Branch migration allows RuvC to scan DNA until it finds its consensus sequence, where it cleaves and resolves cruciform DNA. This is Holliday junction branch migration complex subunit RuvB from Oleidesulfovibrio alaskensis (strain ATCC BAA-1058 / DSM 17464 / G20) (Desulfovibrio alaskensis).